The chain runs to 147 residues: MIRVLIERIDKDLPLPNYATHGSAALDLYSRIDFELPPFGEIGGGLVIPTGIRIALPEGYLALVLPRSGLAAREGISVLNTPGLIDSDYRGEIFVNLINFSNKPFLGKRGMRIAQLLVLQYSRIIWEEVEQLPQTERGEGGLGSTGL.

Substrate is bound by residues 67–69 (RSG), asparagine 80, and 84–86 (LID).

The protein belongs to the dUTPase family. Mg(2+) is required as a cofactor.

It carries out the reaction dUTP + H2O = dUMP + diphosphate + H(+). Its pathway is pyrimidine metabolism; dUMP biosynthesis; dUMP from dCTP (dUTP route): step 2/2. In terms of biological role, this enzyme is involved in nucleotide metabolism: it produces dUMP, the immediate precursor of thymidine nucleotides and it decreases the intracellular concentration of dUTP so that uracil cannot be incorporated into DNA. The sequence is that of Deoxyuridine 5'-triphosphate nucleotidohydrolase from Dictyoglomus turgidum (strain DSM 6724 / Z-1310).